A 539-amino-acid polypeptide reads, in one-letter code: Phosphoenolpyruvate carboxykinase (ATP) (539 aa).

Residues Arg-64, Tyr-206, and Lys-212 each contribute to the substrate site. Residues Lys-212, His-231, and 247–255 (GLSGTGKTT) contribute to the ATP site. The Mn(2+) site is built by Lys-212 and His-231. Asp-268 is a Mn(2+) binding site. ATP contacts are provided by residues Glu-296, Arg-332, 448–449 (RI), and Thr-454. Substrate is bound at residue Arg-332.

It belongs to the phosphoenolpyruvate carboxykinase (ATP) family. Monomer. Mn(2+) serves as cofactor.

Its subcellular location is the cytoplasm. It carries out the reaction oxaloacetate + ATP = phosphoenolpyruvate + ADP + CO2. The protein operates within carbohydrate biosynthesis; gluconeogenesis. Involved in the gluconeogenesis. Catalyzes the conversion of oxaloacetate (OAA) to phosphoenolpyruvate (PEP) through direct phosphoryl transfer between the nucleoside triphosphate and OAA. The sequence is that of Phosphoenolpyruvate carboxykinase (ATP) from Sodalis glossinidius (strain morsitans).